A 362-amino-acid polypeptide reads, in one-letter code: Porin Omp2b (362 aa).

The signal sequence occupies residues 1–22; it reads MNIKSLLLGSAAALVAASGAQA.

It belongs to the alphaproteobacteria porin family. As to quaternary structure, homotrimer.

Its subcellular location is the cell outer membrane. Functionally, forms passive diffusion pores that allow small molecular weight hydrophilic materials across the outer membrane. The chain is Porin Omp2b (omp2b) from Brucella melitensis biotype 1 (strain ATCC 23456 / CCUG 17765 / NCTC 10094 / 16M).